Here is a 68-residue protein sequence, read N- to C-terminus: SERF-like protein YDL085C-A (68 aa).

2 stretches are compositionally biased toward basic and acidic residues: residues 1–43 (MARG…EILR) and 50–68 (DARR…KTRR). Residues 1-68 (MARGNQRDLA…EKLKAEKTRR (68 aa)) form a disordered region. S37 carries the phosphoserine modification.

This sequence belongs to the SERF family.

The protein resides in the cytoplasm. The protein localises to the nucleus. In Saccharomyces cerevisiae (strain ATCC 204508 / S288c) (Baker's yeast), this protein is SERF-like protein YDL085C-A.